Consider the following 263-residue polypeptide: Imidazole glycerol phosphate synthase subunit HisF (263 aa).

Catalysis depends on residues D22 and D141.

Belongs to the HisA/HisF family. In terms of assembly, heterodimer of HisH and HisF.

The protein resides in the cytoplasm. The catalysed reaction is 5-[(5-phospho-1-deoxy-D-ribulos-1-ylimino)methylamino]-1-(5-phospho-beta-D-ribosyl)imidazole-4-carboxamide + L-glutamine = D-erythro-1-(imidazol-4-yl)glycerol 3-phosphate + 5-amino-1-(5-phospho-beta-D-ribosyl)imidazole-4-carboxamide + L-glutamate + H(+). It participates in amino-acid biosynthesis; L-histidine biosynthesis; L-histidine from 5-phospho-alpha-D-ribose 1-diphosphate: step 5/9. Its function is as follows. IGPS catalyzes the conversion of PRFAR and glutamine to IGP, AICAR and glutamate. The HisF subunit catalyzes the cyclization activity that produces IGP and AICAR from PRFAR using the ammonia provided by the HisH subunit. The chain is Imidazole glycerol phosphate synthase subunit HisF from Clavibacter michiganensis subsp. michiganensis (strain NCPPB 382).